Here is a 248-residue protein sequence, read N- to C-terminus: E3 SUMO-protein ligase NSE2 (248 aa).

Met-1 carries the post-translational modification N-acetylmethionine. Glycyl lysine isopeptide (Lys-Gly) (interchain with G-Cter in SUMO2) cross-links involve residues Lys-92 and Lys-109. Residue Ser-118 is modified to Phosphoserine. Residues Lys-127 and Lys-132 each participate in a glycyl lysine isopeptide (Lys-Gly) (interchain with G-Cter in SUMO2) cross-link. The SP-RING-type zinc-finger motif lies at 156–242 (VDEDMIVTQS…LRRAIESHKK (87 aa)). Zn(2+)-binding residues include Cys-187, His-189, Cys-212, and Cys-217.

Belongs to the NSE2 family. Component of the SMC5-SMC6 complex which consists at least of SMC5, SMC6, NSMCE2, NSMCE1, NSMCE4A or EID3 and NSMCE3. Post-translationally, sumoylated, possibly via autosumoylation.

It is found in the nucleus. The protein resides in the chromosome. The protein localises to the telomere. It localises to the PML body. It participates in protein modification; protein sumoylation. In terms of biological role, E3 SUMO-protein ligase component of the SMC5-SMC6 complex, a complex involved in DNA double-strand break repair by homologous recombination. Is not be required for the stability of the complex. The complex may promote sister chromatid homologous recombination by recruiting the SMC1-SMC3 cohesin complex to double-strand breaks. Acts as an E3 ligase mediating SUMO attachment to various proteins such as SMC6L1 and TSNAX, the shelterin complex subunits TERF1, TERF2, TINF2 and TERF2IP, RAD51AP1, and maybe the cohesin components RAD21 and STAG2. Required for recruitment of telomeres to PML nuclear bodies. Required for sister chromatid cohesion during prometaphase and mitotic progression. The polypeptide is E3 SUMO-protein ligase NSE2 (NSMCE2) (Bos taurus (Bovine)).